We begin with the raw amino-acid sequence, 233 residues long: Orotidine 5'-phosphate decarboxylase (233 aa).

Substrate contacts are provided by residues Asp-11, Lys-34, 61-70, Thr-117, Arg-179, Gln-189, Gly-209, and Arg-210; that span reads DLKLHDIPNT. Residue Lys-63 is the Proton donor of the active site.

The protein belongs to the OMP decarboxylase family. Type 1 subfamily. As to quaternary structure, homodimer.

It catalyses the reaction orotidine 5'-phosphate + H(+) = UMP + CO2. It participates in pyrimidine metabolism; UMP biosynthesis via de novo pathway; UMP from orotate: step 2/2. Catalyzes the decarboxylation of orotidine 5'-monophosphate (OMP) to uridine 5'-monophosphate (UMP). In Streptococcus agalactiae serotype III (strain NEM316), this protein is Orotidine 5'-phosphate decarboxylase.